The following is a 396-amino-acid chain: Succinyl-CoA:mesaconate CoA-transferase (396 aa).

Residue aspartate 175 is the Nucleophile of the active site.

Belongs to the CoA-transferase III family. Homodimer.

The enzyme catalyses mesaconate + succinyl-CoA = 2-methylfumaryl-CoA + succinate. Its activity is regulated as follows. Shows highest activity at 4 M KCl. Does not require divalent ions for activity. Functionally, involved in the methylaspartate cycle. Catalyzes the transfer of the CoA moiety from succinyl-CoA to mesaconate to generate mesaconyl-CoA (2-methylfumaryl-CoA) and succinate. Also shows high activity with methylsuccinate as CoA-acceptor, and only low activity with glutarate, acrylate and itaconate. Cannot use other CoA donors like acetyl-CoA, propionyl-CoA, butyryl-CoA or acetoacetyl-CoA. The polypeptide is Succinyl-CoA:mesaconate CoA-transferase (Haloarcula hispanica (strain ATCC 33960 / DSM 4426 / JCM 8911 / NBRC 102182 / NCIMB 2187 / VKM B-1755)).